We begin with the raw amino-acid sequence, 356 residues long: tRNA-specific 2-thiouridylase MnmA (356 aa).

ATP-binding positions include 8-15 (GMSGGVDS) and M34. C103 acts as the Nucleophile in catalysis. Cysteines 103 and 199 form a disulfide. Residue G127 participates in ATP binding. An interaction with tRNA region spans residues 149 to 151 (KDQ). The active-site Cysteine persulfide intermediate is C199. Residues 305 to 306 (RY) form an interaction with tRNA region.

The protein belongs to the MnmA/TRMU family.

Its subcellular location is the cytoplasm. It catalyses the reaction S-sulfanyl-L-cysteinyl-[protein] + uridine(34) in tRNA + AH2 + ATP = 2-thiouridine(34) in tRNA + L-cysteinyl-[protein] + A + AMP + diphosphate + H(+). Catalyzes the 2-thiolation of uridine at the wobble position (U34) of tRNA, leading to the formation of s(2)U34. This Clostridium kluyveri (strain ATCC 8527 / DSM 555 / NBRC 12016 / NCIMB 10680 / K1) protein is tRNA-specific 2-thiouridylase MnmA.